The following is a 250-amino-acid chain: Pyrroloquinoline-quinone synthase (250 aa).

It belongs to the PqqC family.

It catalyses the reaction 6-(2-amino-2-carboxyethyl)-7,8-dioxo-1,2,3,4,7,8-hexahydroquinoline-2,4-dicarboxylate + 3 O2 = pyrroloquinoline quinone + 2 H2O2 + 2 H2O + H(+). It participates in cofactor biosynthesis; pyrroloquinoline quinone biosynthesis. Functionally, ring cyclization and eight-electron oxidation of 3a-(2-amino-2-carboxyethyl)-4,5-dioxo-4,5,6,7,8,9-hexahydroquinoline-7,9-dicarboxylic-acid to PQQ. The protein is Pyrroloquinoline-quinone synthase of Xanthomonas campestris pv. campestris (strain 8004).